A 304-amino-acid polypeptide reads, in one-letter code: MADYHNNYKKNDELEFVRTGYGKDMVKVLHIQRDGKYHSIKEVATSVQLTLSSKKDYLHGDNSDIIPTDTIKNTVHVLAKFKGIKSIEAFGVNICEYFLSSFNHVIRAQVYVEEIPWKRLEKNGVKHVHAFIHTPTGTHFCEVEQLRSGPPVIHSGIKDLKVLKTTQSGFEGFIKDQFTTLPEVKDRCFATQVYCKWRYHQCRDVDFEATWGTIRDLVLEKFAGPYDKGEYSPSVQKTLYDIQVLSLSRVPEIEDMEISLPNIHYFNIDMSKMGLINKEEVLLPLDNPYGKITGTVKRKLSSRL.

Position 2 is an N-acetylalanine (A2). K10 and K23 each carry N6-acetyllysine; alternate. 2 positions are modified to N6-succinyllysine; alternate: K10 and K23. The Charge relay system role is filled by K23. Residues K27 and K36 each carry the N6-acetyllysine modification. S39 and S63 each carry phosphoserine. T68 serves as the catalytic Charge relay system. Urate is bound by residues T68 and D69. An N6-acetyllysine mark is found at K118, K122, and K164. F170 is a urate binding site. 2 positions are modified to N6-acetyllysine: K175 and K185. R187 is a urate binding site. N6-acetyllysine; alternate occurs at positions 221 and 228. N6-succinyllysine; alternate is present on residues K221 and K228. S232 carries the phosphoserine modification. 3 residues coordinate urate: V235, Q236, and N262. The active-site Charge relay system is the H264. K278 carries the post-translational modification N6-acetyllysine. A Phosphotyrosine modification is found at Y289. Residues 302–304 (SRL) carry the Microbody targeting signal motif.

Belongs to the uricase family.

The protein localises to the peroxisome. It catalyses the reaction urate + O2 + H2O = 5-hydroxyisourate + H2O2. Its pathway is purine metabolism; urate degradation; (S)-allantoin from urate: step 1/3. Functionally, catalyzes the oxidation of uric acid to 5-hydroxyisourate, which is further processed to form (S)-allantoin. The sequence is that of Uricase (UOX) from Macaca fascicularis (Crab-eating macaque).